Reading from the N-terminus, the 515-residue chain is RNA-splicing ligase RtcB homolog (515 aa).

The Mn(2+) site is built by aspartate 121, cysteine 124, histidine 229, histidine 269, and histidine 363. 228 to 232 (NHYGE) is a binding site for GMP. GMP-binding positions include 363 to 364 (HN), 412 to 415 (GGTM), serine 419, 438 to 441 (HGSG), and lysine 514. Histidine 438 acts as the GMP-histidine intermediate in catalysis.

This sequence belongs to the RtcB family. As to quaternary structure, catalytic component of the tRNA-splicing ligase complex. Mn(2+) is required as a cofactor.

The enzyme catalyses a 3'-end 3'-phospho-ribonucleotide-RNA + a 5'-end dephospho-ribonucleoside-RNA + GTP = a ribonucleotidyl-ribonucleotide-RNA + GMP + diphosphate. The catalysed reaction is a 3'-end 2',3'-cyclophospho-ribonucleotide-RNA + a 5'-end dephospho-ribonucleoside-RNA + GTP + H2O = a ribonucleotidyl-ribonucleotide-RNA + GMP + diphosphate + H(+). Its function is as follows. Catalytic subunit of the tRNA-splicing ligase complex that acts by directly joining spliced tRNA halves to mature-sized tRNAs by incorporating the precursor-derived splice junction phosphate into the mature tRNA as a canonical 3',5'-phosphodiester. May act as an RNA ligase with broad substrate specificity, and may function toward other RNAs. This is RNA-splicing ligase RtcB homolog from Theileria annulata.